A 703-amino-acid polypeptide reads, in one-letter code: Protein FAR1-RELATED SEQUENCE 6 (703 aa).

The disordered stretch occupies residues 1 to 29 (MERSESVDEDVQASAYLENDEVRERDDPM). Residues 99–184 (NYYNCYASEV…TLDHNHLLGC (86 aa)) enclose the FAR1 domain. The MULE domain maps to 297–392 (VIFIDSSYIS…SLTHIMRKIP (96 aa)). The SWIM-type zinc-finger motif lies at 584-620 (FEVLYNRSVGEVRCICSCFNFYGYLCRHALCVLNFNG).

This sequence belongs to the FHY3/FAR1 family. Expressed in hypocotyls, rosette and cauline leaves, inflorescences stems, flowers and siliques.

It is found in the nucleus. Its function is as follows. Putative transcription activator involved in regulating light control of development. May have a role in controlling flowering time. In Arabidopsis thaliana (Mouse-ear cress), this protein is Protein FAR1-RELATED SEQUENCE 6 (FRS6).